Reading from the N-terminus, the 929-residue chain is Leucine--tRNA ligase (929 aa).

A 'HIGH' region motif is present at residues 42–52 (PYPSGNLHMGH). Residues 614-618 (KMSKS) carry the 'KMSKS' region motif. An ATP-binding site is contributed by Lys617.

Belongs to the class-I aminoacyl-tRNA synthetase family.

The protein resides in the cytoplasm. The catalysed reaction is tRNA(Leu) + L-leucine + ATP = L-leucyl-tRNA(Leu) + AMP + diphosphate. The chain is Leucine--tRNA ligase from Trichodesmium erythraeum (strain IMS101).